The following is a 338-amino-acid chain: Ketol-acid reductoisomerase (NADP(+)) (338 aa).

The KARI N-terminal Rossmann domain occupies 1–181 (MKVFYDKDAD…GGGRAGIIET (181 aa)). Residues 24–27 (YGSQ), arginine 47, and serine 52 each bind NADP(+). Histidine 107 is a catalytic residue. Residue glycine 133 participates in NADP(+) binding. The KARI C-terminal knotted domain maps to 182 to 327 (NFREETETDL…AKLRAMMPWI (146 aa)). Residues aspartate 190, glutamate 194, glutamate 226, and glutamate 230 each contribute to the Mg(2+) site. Residue serine 251 coordinates substrate.

Belongs to the ketol-acid reductoisomerase family. The cofactor is Mg(2+).

The catalysed reaction is (2R)-2,3-dihydroxy-3-methylbutanoate + NADP(+) = (2S)-2-acetolactate + NADPH + H(+). It catalyses the reaction (2R,3R)-2,3-dihydroxy-3-methylpentanoate + NADP(+) = (S)-2-ethyl-2-hydroxy-3-oxobutanoate + NADPH + H(+). It participates in amino-acid biosynthesis; L-isoleucine biosynthesis; L-isoleucine from 2-oxobutanoate: step 2/4. Its pathway is amino-acid biosynthesis; L-valine biosynthesis; L-valine from pyruvate: step 2/4. In terms of biological role, involved in the biosynthesis of branched-chain amino acids (BCAA). Catalyzes an alkyl-migration followed by a ketol-acid reduction of (S)-2-acetolactate (S2AL) to yield (R)-2,3-dihydroxy-isovalerate. In the isomerase reaction, S2AL is rearranged via a Mg-dependent methyl migration to produce 3-hydroxy-3-methyl-2-ketobutyrate (HMKB). In the reductase reaction, this 2-ketoacid undergoes a metal-dependent reduction by NADPH to yield (R)-2,3-dihydroxy-isovalerate. The protein is Ketol-acid reductoisomerase (NADP(+)) of Polynucleobacter asymbioticus (strain DSM 18221 / CIP 109841 / QLW-P1DMWA-1) (Polynucleobacter necessarius subsp. asymbioticus).